A 292-amino-acid chain; its full sequence is Bifunctional protein FolD (292 aa).

NADP(+) contacts are provided by residues Gly166 to Ser168, Ser191, and Ile232.

The protein belongs to the tetrahydrofolate dehydrogenase/cyclohydrolase family. In terms of assembly, homodimer.

It catalyses the reaction (6R)-5,10-methylene-5,6,7,8-tetrahydrofolate + NADP(+) = (6R)-5,10-methenyltetrahydrofolate + NADPH. The enzyme catalyses (6R)-5,10-methenyltetrahydrofolate + H2O = (6R)-10-formyltetrahydrofolate + H(+). The protein operates within one-carbon metabolism; tetrahydrofolate interconversion. Functionally, catalyzes the oxidation of 5,10-methylenetetrahydrofolate to 5,10-methenyltetrahydrofolate and then the hydrolysis of 5,10-methenyltetrahydrofolate to 10-formyltetrahydrofolate. In Synechococcus sp. (strain RCC307), this protein is Bifunctional protein FolD.